Here is a 736-residue protein sequence, read N- to C-terminus: Probable beta-glucosidase L (736 aa).

A signal peptide spans 1–21 (MNYRVPSLKATALAMAALTQA). The N-linked (GlcNAc...) asparagine glycan is linked to N224. D252 is an active-site residue. N295, N363, N429, and N607 each carry an N-linked (GlcNAc...) asparagine glycan.

Belongs to the glycosyl hydrolase 3 family.

The protein resides in the secreted. The enzyme catalyses Hydrolysis of terminal, non-reducing beta-D-glucosyl residues with release of beta-D-glucose.. It participates in glycan metabolism; cellulose degradation. Its function is as follows. Beta-glucosidases are one of a number of cellulolytic enzymes involved in the degradation of cellulosic biomass. Catalyzes the last step releasing glucose from the inhibitory cellobiose. The chain is Probable beta-glucosidase L (bglL) from Aspergillus terreus (strain NIH 2624 / FGSC A1156).